Here is an 87-residue protein sequence, read N- to C-terminus: UPF0335 protein RHECIAT_CH0003797 (87 aa).

Belongs to the UPF0335 family.

The protein is UPF0335 protein RHECIAT_CH0003797 of Rhizobium etli (strain CIAT 652).